The chain runs to 56 residues: ComX pheromone (56 aa).

Residues M1 to T50 constitute a propeptide that is removed on maturation. Residue W54 is modified to Tryptophan derivative. A lipid anchor (3'-farnesyl-2',N2-cyclotryptophan) is attached at W54.

Interacts directly with the sensor histidine kinase ComP and stimulates its activity. In terms of processing, trp-54 is modified by farnesylation, which is essential for activity. Modified by the tryptophan prenyltransferase ComQ before export to the extracellular environment. The type of isoprenyl derivative differs among the different pherotypes and depends on ComX primary sequence.

The protein resides in the secreted. Its function is as follows. Part of a major quorum-sensing system that regulates the development of genetic competence. Acts through the activation of the two-component regulatory system ComP/ComA composed of a sensor histidine kinase, ComP, and a response regulator, ComA. The sequence is that of ComX pheromone from Bacillus mojavensis.